The primary structure comprises 794 residues: Protein sel-1 homolog 1 (794 aa).

Residues 1–21 (MRVRIGLTLLLCAVLLSLASA) form the signal peptide. The disordered stretch occupies residues 21 to 50 (ASSDEEGSQDESLDSKTTLTSDESVKDHTT). An interaction with ERLEC1, OS9 and SYVN1 region spans residues 22-737 (SSDEEGSQDE…DMFTQLDMDQ (716 aa)). The Lumenal segment spans residues 22-738 (SSDEEGSQDE…MFTQLDMDQL (717 aa)). Residues 23–32 (SDEEGSQDES) are compositionally biased toward acidic residues. A Phosphoserine modification is found at S63. The segment covering 64 to 77 (EESELESSIQEEED) has biased composition (acidic residues). Residues 64 to 109 (EESELESSIQEEEDSLKSQEGESVTEDISFLESPNPENKDYEEPKK) are disordered. The 49-residue stretch at 122-170 (AHGEPCHFPFLFLDKEYDECTSDGREDGRLWCATTYDYKADEKWGFCET) folds into the Fibronectin type-II domain. Disulfide bonds link C127–C153 and C141–C168. Sel1-like repeat units follow at residues 183-218 (AEMM…SMNH), 219-254 (TKAL…EEGS), 255-290 (PKGQ…LGGN), 291-326 (LIAH…NHVA), 373-409 (VQAQ…NAGN), 410-446 (SHAM…DMGN), 447-482 (PVGQ…EQGW), 483-518 (VDGQ…QGGH), and 519-554 (ILAF…ERGR). 2 N-linked (GlcNAc...) asparagine glycosylation sites follow: N195 and N217. A glycan (N-linked (GlcNAc...) asparagine) is linked at N272. The interval 352–537 (NSGMLEEDLI…MHASGTGVMR (186 aa)) is important for homodimerization and oligomerization. N-linked (GlcNAc...) asparagine glycosylation occurs at N431. Residue N608 is glycosylated (N-linked (GlcNAc...) asparagine). Sel1-like repeat units follow at residues 627 to 662 (TVAR…EQQH) and 664 to 699 (AQAM…EASP). The interval 643 to 723 (TDVDYETAFI…VVYFLQYIRE (81 aa)) is interaction with SYVN1. The tract at residues 738–794 (LLGPEWDLYLMTIIALLLGTVIAYRQRQHQDMPAPRPPGPRPAPPQQEGPPEQQPPQ) is mediates retention in the endoplasmic reticulum. The helical transmembrane segment at 739-759 (LGPEWDLYLMTIIALLLGTVI) threads the bilayer. Over 760 to 794 (AYRQRQHQDMPAPRPPGPRPAPPQQEGPPEQQPPQ) the chain is Cytoplasmic. Residues 766–794 (HQDMPAPRPPGPRPAPPQQEGPPEQQPPQ) form a disordered region. Residues 771–794 (APRPPGPRPAPPQQEGPPEQQPPQ) are compositionally biased toward pro residues.

It belongs to the sel-1 family. Homodimer and homooligomer. May form a complex with ERLEC1, HSPA5, OS9, and SYVN1. Interacts with FOXRED2 and EDEM1. Interacts with LPL. Interacts with LMF1; may stabilize the complex formed by LPL and LMF1 and thereby promote the export of LPL dimers. Component of the HRD1 complex, which comprises at least SYNV1/HRD1, DERL1/2, FAM8A1, HERPUD1/HERP, OS9, SEL1L and UBE2J1. SYNV1 assembles with SEL1L and FAM8A1 through its transmembrane domains, but interaction with its cytoplasmic domain is required to confer stability to FAM8A1 and enhance recruitment of HERPUD1. The interaction with SYNV1/HRD1 is direct. As to quaternary structure, (Microbial infection) Interacts with human cytomegalovirus protein UL148. Post-translationally, N-glycosylated. In terms of tissue distribution, highly expressed in pancreas.

It localises to the endoplasmic reticulum membrane. Functionally, plays a role in the endoplasmic reticulum quality control (ERQC) system also called ER-associated degradation (ERAD) involved in ubiquitin-dependent degradation of misfolded endoplasmic reticulum proteins. Enhances SYVN1 stability. Plays a role in LPL maturation and secretion. Required for normal differentiation of the pancreas epithelium, and for normal exocrine function and survival of pancreatic cells. May play a role in Notch signaling. In Homo sapiens (Human), this protein is Protein sel-1 homolog 1.